The sequence spans 508 residues: Flagellin (508 aa).

It belongs to the bacterial flagellin family.

Its subcellular location is the secreted. It is found in the bacterial flagellum. Flagellin is the subunit protein which polymerizes to form the filaments of bacterial flagella. This chain is Flagellin (fliC), found in Salmonella oranienberg.